The following is a 292-amino-acid chain: Lipoyl synthase (292 aa).

C38, C43, C49, C64, C68, C71, and S277 together coordinate [4Fe-4S] cluster. A Radical SAM core domain is found at 50–266 (WSKGTATFLL…REIALDAGFR (217 aa)).

It belongs to the radical SAM superfamily. Lipoyl synthase family. The cofactor is [4Fe-4S] cluster.

The protein localises to the cytoplasm. It catalyses the reaction [[Fe-S] cluster scaffold protein carrying a second [4Fe-4S](2+) cluster] + N(6)-octanoyl-L-lysyl-[protein] + 2 oxidized [2Fe-2S]-[ferredoxin] + 2 S-adenosyl-L-methionine + 4 H(+) = [[Fe-S] cluster scaffold protein] + N(6)-[(R)-dihydrolipoyl]-L-lysyl-[protein] + 4 Fe(3+) + 2 hydrogen sulfide + 2 5'-deoxyadenosine + 2 L-methionine + 2 reduced [2Fe-2S]-[ferredoxin]. Its pathway is protein modification; protein lipoylation via endogenous pathway; protein N(6)-(lipoyl)lysine from octanoyl-[acyl-carrier-protein]: step 2/2. Its function is as follows. Catalyzes the radical-mediated insertion of two sulfur atoms into the C-6 and C-8 positions of the octanoyl moiety bound to the lipoyl domains of lipoate-dependent enzymes, thereby converting the octanoylated domains into lipoylated derivatives. This Chlorobaculum parvum (strain DSM 263 / NCIMB 8327) (Chlorobium vibrioforme subsp. thiosulfatophilum) protein is Lipoyl synthase.